The chain runs to 108 residues: MGCCGCGGCGGGCGGCSGGCGGGCGGGCGGGGCGGGCGSCTTCRCYRVGCCSSCCPCCRGCCGGCCSTPVICCCRRTCSSCGCGYGKGCCQQKGCCQQKCCCQKQCCC.

The segment at 4–84 is 12 X 2 AA repeats of CG; that stretch reads CGCGGCGGGC…RRTCSSCGCG (81 aa).

The protein belongs to the KRTAP type 28 family.

In the hair cortex, hair keratin intermediate filaments are embedded in an interfilamentous matrix, consisting of hair keratin-associated proteins (KRTAP), which are essential for the formation of a rigid and resistant hair shaft through their extensive disulfide bond cross-linking with abundant cysteine residues of hair keratins. The matrix proteins include the high-sulfur and high-glycine-tyrosine keratins. The chain is Small cysteine and glycine repeat-containing protein 8 from Homo sapiens (Human).